A 94-amino-acid chain; its full sequence is Small ribosomal subunit protein uS19 (94 aa).

It belongs to the universal ribosomal protein uS19 family.

Its function is as follows. Protein S19 forms a complex with S13 that binds strongly to the 16S ribosomal RNA. In Carboxydothermus hydrogenoformans (strain ATCC BAA-161 / DSM 6008 / Z-2901), this protein is Small ribosomal subunit protein uS19.